A 208-amino-acid polypeptide reads, in one-letter code: Uracil phosphoribosyltransferase (208 aa).

5-phospho-alpha-D-ribose 1-diphosphate-binding positions include arginine 78, arginine 103, and 130–138 (DPMLATGGS). Uracil contacts are provided by residues isoleucine 193 and 198–200 (GDA). A 5-phospho-alpha-D-ribose 1-diphosphate-binding site is contributed by aspartate 199.

It belongs to the UPRTase family. Mg(2+) is required as a cofactor.

The catalysed reaction is UMP + diphosphate = 5-phospho-alpha-D-ribose 1-diphosphate + uracil. The protein operates within pyrimidine metabolism; UMP biosynthesis via salvage pathway; UMP from uracil: step 1/1. Allosterically activated by GTP. In terms of biological role, catalyzes the conversion of uracil and 5-phospho-alpha-D-ribose 1-diphosphate (PRPP) to UMP and diphosphate. The polypeptide is Uracil phosphoribosyltransferase (Shewanella piezotolerans (strain WP3 / JCM 13877)).